The chain runs to 348 residues: Protein pelota homolog (348 aa).

Belongs to the eukaryotic release factor 1 family. Pelota subfamily. Monomer. A divalent metal cation is required as a cofactor.

It localises to the cytoplasm. Functionally, may function in recognizing stalled ribosomes, interact with stem-loop structures in stalled mRNA molecules, and effect endonucleolytic cleavage of the mRNA. May play a role in the release non-functional ribosomes and degradation of damaged mRNAs. Has endoribonuclease activity. In Methanococcus maripaludis (strain DSM 14266 / JCM 13030 / NBRC 101832 / S2 / LL), this protein is Protein pelota homolog.